A 101-amino-acid polypeptide reads, in one-letter code: MQRLCVYVLIFALALAAFSEASWKPRSQQPDAPLGTGANRDLELPWLEQQGPASHHRRQLGPQGPPHLVADPSKKQGPWLEEEEEAYGWMDFGRRSAEDEN.

The first 21 residues, M1 to A21, serve as a signal peptide directing secretion. A disordered region spans residues S22–E82. At Q59 the chain carries Pyrrolidone carboxylic acid; in form big gastrin. The residue at position 76 (Q76) is a Pyrrolidone carboxylic acid; in form gastrin. At Y87 the chain carries Sulfotyrosine; partial. A Phenylalanine amide modification is found at F92. S96 bears the Phosphoserine mark. A propeptide spans S96–N101 (removed in mature form).

It belongs to the gastrin/cholecystokinin family. Two different processing pathways probably exist in antral G-cells. In the dominant pathway progastrin is cleaved at three sites resulting in two major bioactive gastrins, gastrin-34 and gastrin-17. In the putative alternative pathway, progastrin may be processed only at the most C-terminal dibasic site resulting in the synthesis of gastrin-71. In terms of processing, sulfation enhances proteolytic processing, and blocks peptide degradation. Levels of sulfation differ between proteolytically-cleaved gastrins. Thus, gastrin-6 is almost 73% sulfated, whereas the larger gastrins are less than 50% sulfated. Sulfation levels are also tissue-specific.

The protein resides in the secreted. Gastrin stimulates the stomach mucosa to produce and secrete hydrochloric acid and the pancreas to secrete its digestive enzymes. It also stimulates smooth muscle contraction and increases blood circulation and water secretion in the stomach and intestine. This Homo sapiens (Human) protein is Gastrin (GAST).